The chain runs to 720 residues: Methionine--tRNA ligase (720 aa).

Positions 27–37 (PYANGQIHIGH) match the 'HIGH' region motif. Zn(2+) contacts are provided by cysteine 158, cysteine 161, cysteine 171, and cysteine 174. Residues 348 to 352 (KMSKS) carry the 'KMSKS' region motif. Lysine 351 is an ATP binding site. Positions 614–720 (DFAKVDLRIA…SGAKPGMRVK (107 aa)) constitute a tRNA-binding domain.

This sequence belongs to the class-I aminoacyl-tRNA synthetase family. MetG type 1 subfamily. As to quaternary structure, homodimer. It depends on Zn(2+) as a cofactor.

It localises to the cytoplasm. The enzyme catalyses tRNA(Met) + L-methionine + ATP = L-methionyl-tRNA(Met) + AMP + diphosphate. Its function is as follows. Is required not only for elongation of protein synthesis but also for the initiation of all mRNA translation through initiator tRNA(fMet) aminoacylation. The polypeptide is Methionine--tRNA ligase (Burkholderia ambifaria (strain MC40-6)).